The chain runs to 379 residues: Cytochrome b (379 aa).

A run of 4 helical transmembrane segments spans residues 33–53 (FGSL…FLAM), 77–98 (WLIR…FIHV), 113–133 (WNIG…GYVL), and 178–198 (FFAF…VHLL). Heme b contacts are provided by H83 and H97. Heme b-binding residues include H182 and H196. A ubiquinone is bound at residue H201. A run of 4 helical transmembrane segments spans residues 226 to 246 (TKDL…ALFF), 288 to 308 (LGGV…PLLN), 320 to 340 (VTQV…WIGG), and 347 to 367 (FTMI…ILIP).

This sequence belongs to the cytochrome b family. In terms of assembly, the cytochrome bc1 complex contains 11 subunits: 3 respiratory subunits (MT-CYB, CYC1 and UQCRFS1), 2 core proteins (UQCRC1 and UQCRC2) and 6 low-molecular weight proteins (UQCRH/QCR6, UQCRB/QCR7, UQCRQ/QCR8, UQCR10/QCR9, UQCR11/QCR10 and a cleavage product of UQCRFS1). This cytochrome bc1 complex then forms a dimer. The cofactor is heme b.

It localises to the mitochondrion inner membrane. In terms of biological role, component of the ubiquinol-cytochrome c reductase complex (complex III or cytochrome b-c1 complex) that is part of the mitochondrial respiratory chain. The b-c1 complex mediates electron transfer from ubiquinol to cytochrome c. Contributes to the generation of a proton gradient across the mitochondrial membrane that is then used for ATP synthesis. This chain is Cytochrome b (MT-CYB), found in Akodon lutescens puer (Altiplano grass mouse).